The chain runs to 463 residues: Lipase 5 (463 aa).

The first 14 residues, 1–14 (MLYLILFLIAPIYA), serve as a signal peptide directing secretion. Cysteine 110 and cysteine 281 are oxidised to a cystine. The active-site Charge relay system is the serine 194. The N-linked (GlcNAc...) asparagine glycan is linked to asparagine 229. Active-site charge relay system residues include aspartate 343 and histidine 376. Cysteine 359 and cysteine 404 are joined by a disulfide.

The protein belongs to the AB hydrolase superfamily. Lipase family. Class Lip subfamily.

The protein localises to the secreted. The catalysed reaction is a triacylglycerol + H2O = a diacylglycerol + a fatty acid + H(+). Its activity is regulated as follows. Fe(2)+, Fe(3+), Hg(2+) as well as ethylenediaminetetraacetic acid (EDTA) and phenylmethanesulfonyl fluoride (PMSF) strongly inhibit the lipase activity. Surfactants such as Tween 20, Tween 80 and TritonX-100 show also inhibitory effect in the lipase activity. Sodium dodecyl sulfate (SDS) sharply decreases the lipase activity by 85%. Methanol, ethanol, and acetone have also negative effect on the lipase activity, with residual activities at 48%, 24% and 44% respectively. Finally, lipase activity is almost lost in the presence of isopropanol alcohol. Secreted lipase that is able to hydrolyze both the neutral triacylglycerols and the monopalmitate ester Tween 40, allowing the use of hydrolyzed products as carbon sources. Exhibits a preference for the short and medium chain length p-NP (C4 and C8 acyl group) esters rather than the long chain length p-NP esters (C12, C16 and C18 acyl group). Has broad lipolytic activity, which may be important for colonization and subsequent infection, therefore contributing to the persistence and virulence in human tissue. The chain is Lipase 5 from Candida albicans (strain SC5314 / ATCC MYA-2876) (Yeast).